Reading from the N-terminus, the 635-residue chain is Threonine--tRNA ligase (635 aa).

In terms of domain architecture, TGS spans 1 to 61 (MPIITLPDGN…EKDANIAIIT (61 aa)). The interval 242–533 (DHRKIGKQLD…LTEEYAGVYP (292 aa)) is catalytic. Residues Cys-333, His-384, and His-510 each contribute to the Zn(2+) site.

Belongs to the class-II aminoacyl-tRNA synthetase family. Homodimer. Requires Zn(2+) as cofactor.

It localises to the cytoplasm. It catalyses the reaction tRNA(Thr) + L-threonine + ATP = L-threonyl-tRNA(Thr) + AMP + diphosphate + H(+). Functionally, catalyzes the attachment of threonine to tRNA(Thr) in a two-step reaction: L-threonine is first activated by ATP to form Thr-AMP and then transferred to the acceptor end of tRNA(Thr). Also edits incorrectly charged L-seryl-tRNA(Thr). This is Threonine--tRNA ligase from Psychromonas ingrahamii (strain DSM 17664 / CCUG 51855 / 37).